We begin with the raw amino-acid sequence, 622 residues long: Calmodulin-binding protein 60 C (622 aa).

A compositionally biased stretch (basic and acidic residues) spans 1-19; the sequence is MQTRYMERTNSMREKRKLE. A disordered region spans residues 1-35; that stretch reads MQTRYMERTNSMREKRKLEEDDNQQQQQQPERKRP. The segment at 10–89 is calmodulin-binding; the sequence is NSMREKRKLE…RLSERSSPKR (80 aa). The tract at residues 159–282 is DNA-binding; sequence EDDDGWSGEE…AFHKKLNKAG (124 aa).

It belongs to the plant ACBP60 protein family. Interacts with calmodulin (CaM). As to expression, expressed in stems, flowers and root.

It localises to the nucleus. Transcription activator that binds DNA in a sequence-specific manner, likely 5'-GAAATTTTGG-3', to promote the expression of target genes. The chain is Calmodulin-binding protein 60 C from Arabidopsis thaliana (Mouse-ear cress).